Here is a 337-residue protein sequence, read N- to C-terminus: Trace amine-associated receptor 5 (337 aa).

Residues 1-34 (MRAVFIQGAEEHPAAFCYQVNGSCPRTVHTLGIQ) are Extracellular-facing. Asn21 carries an N-linked (GlcNAc...) asparagine glycan. Intrachain disulfides connect Cys24–Cys188 and Cys99–Cys192. A helical membrane pass occupies residues 35–55 (LVIYLACAAGMLIIVLGNLFV). Residues 56–70 (AFAVSYFKALHTPTN) are Cytoplasmic-facing. Residues 71-91 (FLLLSLALADMFLGLLVLPLS) form a helical membrane-spanning segment. Topologically, residues 92–109 (TIRSVESCWFFGDFLCRL) are extracellular. A helical membrane pass occupies residues 110-130 (HTYLDPLFCLTSIFHLCFISI). Topologically, residues 131–154 (DRHCAICDPLLYPSKFTVRVALRY) are cytoplasmic. A helical transmembrane segment spans residues 155–175 (ILAGWGVPAAYTSLFLYTDVV). The segment at 176–189 (ETRLSQWLEEMPCV) is extracellular Loop 2 (ECL2). Residues 176–204 (ETRLSQWLEEMPCVGSCQLLLNKFWGWLN) are Extracellular-facing. A helical membrane pass occupies residues 205 to 225 (FPLFFVPCLIMISLYVKIFVV). At 226–253 (ATRQAQQITTLSKNLAGAAKHDRKAAKT) the chain is on the cytoplasmic side. The helical transmembrane segment at 254-274 (LGIAVGIYLLCWLPFTIDTMV) threads the bilayer. The Extracellular segment spans residues 275–284 (DSLLHFITPP). Residues 285-307 (LVFDIFIWFAYFNSACNPIIYVF) form a helical membrane-spanning segment. Over 308-337 (SYQWFRKALKLTLSQKVFSPQTRTVDLYQE) the chain is Cytoplasmic.

It belongs to the G-protein coupled receptor 1 family.

The protein localises to the cell membrane. Olfactory receptor specific for trimethylamine, a trace amine. Trimethylamine is a bacterial metabolite found in some animal odors. Trimethylamine-binding causes a conformation change that triggers signaling via G(s)-class of G alpha proteins (GNAL or GNAS). The chain is Trace amine-associated receptor 5 (TAAR5) from Pan troglodytes (Chimpanzee).